A 499-amino-acid polypeptide reads, in one-letter code: Glucose-6-phosphate exchanger SLC37A2 (499 aa).

The helical transmembrane segment at 21–40 threads the bilayer; the sequence is YRGFIIVMTFLFYTCYHMSR. Residues Asn53, Asn62, and Asn66 are each glycosylated (N-linked (GlcNAc...) asparagine). Transmembrane regions (helical) follow at residues 86–106, 116–136, 138–158, 187–207, 208–228, 302–322, 334–354, 362–382, 391–411, 434–454, and 458–478; these read GSLDTAFLVSYAIGMFFSGIF, LSGGMIICGIFTSFMGLGYYW, IHALWYYILFQILNGLAQTTG, AVGNILGSLIAGAFVSTAWGL, SFIVPGIIIAAFGIFCFFFLV, LCLLFAKLVSYTFLYWLPLYI, GDLSTLFDVGGIIGGILAGGI, AITCTIMLILTAPMLFIYNYL, VAMLIVCGILVNGPYSLITTA, AIIDGSGSIGAALGPSLAGVL, and GWNYVFYMLIAADICACLLLV.

Belongs to the major facilitator superfamily. Organophosphate:Pi antiporter (OPA) (TC 2.A.1.4) family.

Its subcellular location is the endoplasmic reticulum membrane. It catalyses the reaction D-glucose 6-phosphate(in) + phosphate(out) = D-glucose 6-phosphate(out) + phosphate(in). Inorganic phosphate and glucose-6-phosphate antiporter. May transport cytoplasmic glucose-6-phosphate into the lumen of the endoplasmic reticulum and translocate inorganic phosphate into the opposite direction. The sequence is that of Glucose-6-phosphate exchanger SLC37A2 from Xenopus tropicalis (Western clawed frog).